The chain runs to 478 residues: Growth/differentiation factor 10 (478 aa).

A signal peptide spans 1-33; sequence MAHVPARTSPGPGPQLLLLLLPLFLLLLRDVAG. Residues 34–368 constitute a propeptide that is removed on maturation; the sequence is SHRAPAWSAL…EKTMQKARRK (335 aa). 3 N-linked (GlcNAc...) asparagine glycosylation sites follow: asparagine 118, asparagine 156, and asparagine 281. Residues 266–319 are disordered; that stretch reads YDPFPAGDPEPRAAPNNSADPRVRRAAQATGPLQDNELPGLDERPPRAHAQHFH. Disulfide bonds link cysteine 376–cysteine 443, cysteine 405–cysteine 475, and cysteine 409–cysteine 477. N-linked (GlcNAc...) asparagine glycosylation is present at asparagine 469.

The protein belongs to the TGF-beta family. Homodimer or heterodimer. Can form a non-covalent complex of the mature region and the pro-region. In terms of tissue distribution, expressed in femur, brain, lung, skeletal muscle, pancreas and testis.

Its subcellular location is the secreted. In terms of biological role, growth factor involved in osteogenesis and adipogenesis. Plays an inhibitory role in the process of osteoblast differentiation via SMAD2/3 pathway. Plays an inhibitory role in the process of adipogenesis. The sequence is that of Growth/differentiation factor 10 from Homo sapiens (Human).